The chain runs to 297 residues: Developmental pluripotency-associated protein 4 (297 aa).

The interval 1–77 (MEPSGSKKGR…KVPVPPFPQH (77 aa)) is disordered. Residues 23–34 (SSQPSTSSAKTK) are compositionally biased toward low complexity. The segment covering 43 to 63 (SEKDDGCKPEEKSAQDPETPG) has biased composition (basic and acidic residues). A Phosphoserine modification is found at Ser211.

As to quaternary structure, interacts with DPPA2. Interacts with PCGF1.

It localises to the nucleus. Functionally, may be involved in the maintenance of active epigenetic status of target genes. May inhibit differentiation of embryonic stem (ES) cells into a primitive ectoderm lineage. This chain is Developmental pluripotency-associated protein 4 (Dppa4), found in Rattus norvegicus (Rat).